Here is a 250-residue protein sequence, read N- to C-terminus: Probable transcriptional regulatory protein ROP_68700 (250 aa).

Belongs to the TACO1 family.

It is found in the cytoplasm. The polypeptide is Probable transcriptional regulatory protein ROP_68700 (Rhodococcus opacus (strain B4)).